A 324-amino-acid polypeptide reads, in one-letter code: N-acetylmuramoyl-L-alanine amidase sle1 (324 aa).

An N-terminal signal peptide occupies residues 1 to 25 (MQKKYITAIIGTTALSALASTHAQA). LysM domains lie at 27-70 (TTHT…VLKV), 84-127 (TVYT…KLKV), and 147-190 (ATYT…KLKV). One can recognise a Peptidase C51 domain in the interval 200–324 (SNNTRSNGGY…YQVRNYKFIH (125 aa)).

The protein localises to the secreted. Its subcellular location is the cell surface. It catalyses the reaction Hydrolyzes the link between N-acetylmuramoyl residues and L-amino acid residues in certain cell-wall glycopeptides.. Functionally, peptidoglycan hydrolase involved in the splitting of the septum during cell division. This chain is N-acetylmuramoyl-L-alanine amidase sle1 (sle1), found in Staphylococcus epidermidis (strain ATCC 12228 / FDA PCI 1200).